Here is a 418-residue protein sequence, read N- to C-terminus: MADIYEHQVPEKLRGKYQAMIVYCILGFGSLISWNSMLTTADYYYKVFPDYHPSRVLTLVYQPFAFGAIVILAYHESKTSTRKRNLIGYILYTISTFLLIVLDLATKGRGGFGPYTGLCAVVAAFGLADATVQGGMFGDLSLMCPELVQSYMGGMAVAGALTSALRLITKAAFEKSNNGLRKGAMMFLAISTCIELLSVMLYAYVLPKLPIVMYYRRKAASQGSKTVSADLAAAGIQNQSDLSDDDSKNQRLSKKELLFQNIDHAVNLFLIYVCTLSIFPGFLYENTGQHGLGAWYALVLVAMYNCWDLVGRYTPLVKWLNIENRKLITIAVLSRYLLIPAFYFTAKYGDQGWMIMLVSVLGLTNGHLTVCIMTIAPKGYKGPEQNALGNLLVIFLLGGIFAGVALDWLWLIGKKNAF.

11 helical membrane passes run 19-39 (AMIVYCILGFGSLISWNSMLT), 56-76 (VLTLVYQPFAFGAIVILAYHE), 86-106 (LIGYILYTISTFLLIVLDLAT), 112-132 (FGPYTGLCAVVAAFGLADATV), 142-162 (LMCPELVQSYMGGMAVAGALT), 186-206 (MFLAISTCIELLSVMLYAYVL), 264-284 (HAVNLFLIYVCTLSIFPGFLY), 291-311 (GLGAWYALVLVAMYNCWDLVG), 326-346 (KLITIAVLSRYLLIPAFYFTA), 353-373 (WMIMLVSVLGLTNGHLTVCIM), and 392-412 (LVIFLLGGIFAGVALDWLWLI).

Belongs to the SLC29A/ENT transporter (TC 2.A.57) family. Expressed in leaves and siliques.

It is found in the cell membrane. In terms of biological role, nucleoside transporter that can mediate uptake of adenosine, uridine, guanosine or cytidine when expressed in a heterologous system (yeast). The chain is Equilibrative nucleotide transporter 6 (ENT6) from Arabidopsis thaliana (Mouse-ear cress).